The chain runs to 358 residues: Tyrosinase ustQ (358 aa).

An N-linked (GlcNAc...) asparagine glycan is attached at N28. Residues 37-57 (FVPVYAGLTIISLITVTVSLV) form a helical membrane-spanning segment. N-linked (GlcNAc...) asparagine glycans are attached at residues N91 and N109. 2 residues coordinate Cu cation: H128 and H137. N-linked (GlcNAc...) asparagine glycans are attached at residues N172 and N214. Residues H266, H270, and H292 each coordinate Cu cation. N-linked (GlcNAc...) asparagine glycosylation is found at N321 and N325.

It belongs to the tyrosinase family. Cu(2+) is required as a cofactor.

The protein localises to the membrane. The enzyme catalyses 2 L-dopa + O2 = 2 L-dopaquinone + 2 H2O. The catalysed reaction is L-tyrosine + O2 = L-dopaquinone + H2O. The protein operates within mycotoxin biosynthesis. Its function is as follows. Tyrosinase; part of the gene cluster that mediates the biosynthesis of the secondary metabolite ustiloxin B, an antimitotic tetrapeptide. First, ustA is processed by the subtilisin-like endoprotease Kex2 that is outside the ustiloxin B gene cluster, at the C-terminal side of Arg-Lys, after transfer to Golgi apparatus through the endoplasmic reticulum (ER). Cleavage by KEX2 generates 16 peptides YAIG-I to YAIG-XVI. To process the precursor peptide further, at least two peptidases are necessary to cleave the N-terminal and C-terminal sides of the Tyr-Ala-Ile-Gly core peptide which serves as backbone for the synthesis of ustiloxin B, through cyclization and modification of the tyrosine with a non-protein coding amino acid, norvaline. One of the two peptidases must be the serine peptidase ustP; and the other pepdidase is probably ustH. Macrocyclization of the core peptide derived from ustA requires the tyrosinase ustQ, as well as the homologous oxidases ustYa and ustYb, and leads to the production of the first cyclization product N-desmethylustiloxin F. For the formation of N-desmethylustiloxin F, three oxidation steps are required, hydroxylation at the benzylic position, hydroxylation at either the aromatic ring of Tyr or beta-position of Ile, and oxidative cyclization. UstQ may catalyze the oxidation of a phenol moiety, whereas the ustYa and ustYb are most likely responsible for the remaining two-step oxidations. N-desmethylustiloxin F is then methylated by ustM to yield ustiloxin F which in turn substrate of the cytochrome P450 monooxygenase ustC which catalyzes the formation of S-deoxyustiloxin H. The flavoprotein monooxygenases ustF1 and ustF2 then participate in the modification of the side chain of S-deoxyustiloxin H, leading to the synthesis of an oxime intermediate, via ustiloxin H. Finally, carboxylative dehydration performed by the cysteine desulfurase-like protein ustD yields ustiloxin B. In Aspergillus flavus (strain ATCC 200026 / FGSC A1120 / IAM 13836 / NRRL 3357 / JCM 12722 / SRRC 167), this protein is Tyrosinase ustQ.